The sequence spans 429 residues: Chaperone SurA (429 aa).

An N-terminal signal peptide occupies residues 1-18; sequence MFKRIALVCALFSGICFA. PpiC domains are found at residues 170–271 and 281–380; these read NLTY…KLVA and ITQT…EVIA.

The protein localises to the periplasm. The catalysed reaction is [protein]-peptidylproline (omega=180) = [protein]-peptidylproline (omega=0). In terms of biological role, chaperone involved in the correct folding and assembly of outer membrane proteins. Recognizes specific patterns of aromatic residues and the orientation of their side chains, which are found more frequently in integral outer membrane proteins. May act in both early periplasmic and late outer membrane-associated steps of protein maturation. The sequence is that of Chaperone SurA from Legionella pneumophila (strain Paris).